We begin with the raw amino-acid sequence, 146 residues long: Large ribosomal subunit protein uL15 (146 aa).

A disordered region spans residues 18–45; that stretch reads VLGRGLGCGKGKTSGRGHKGQKARSGCA. Over residues 30–39 the composition is skewed to basic residues; that stretch reads TSGRGHKGQK.

The protein belongs to the universal ribosomal protein uL15 family. In terms of assembly, part of the 50S ribosomal subunit.

In terms of biological role, binds to the 23S rRNA. The sequence is that of Large ribosomal subunit protein uL15 from Anaplasma marginale (strain St. Maries).